The primary structure comprises 394 residues: Elongation factor Tu 2 (394 aa).

One can recognise a tr-type G domain in the interval 10-204 (KPHVNVGTIG…YLDSYIPEPE (195 aa)). The segment at 19–26 (GHVDHGKT) is G1. 19 to 26 (GHVDHGKT) is a binding site for GTP. T26 contacts Mg(2+). The G2 stretch occupies residues 60-64 (GITIN). Residues 81–84 (DCPG) are G3. GTP is bound by residues 81 to 85 (DCPGH) and 136 to 139 (NKCD). The segment at 136–139 (NKCD) is G4. The tract at residues 174-176 (SAL) is G5.

It belongs to the TRAFAC class translation factor GTPase superfamily. Classic translation factor GTPase family. EF-Tu/EF-1A subfamily. In terms of assembly, monomer.

The protein localises to the cytoplasm. The enzyme catalyses GTP + H2O = GDP + phosphate + H(+). Its function is as follows. GTP hydrolase that promotes the GTP-dependent binding of aminoacyl-tRNA to the A-site of ribosomes during protein biosynthesis. This Serratia proteamaculans (strain 568) protein is Elongation factor Tu 2.